The chain runs to 949 residues: Glycine dehydrogenase (decarboxylating) (949 aa).

Lysine 704 bears the N6-(pyridoxal phosphate)lysine mark.

The protein belongs to the GcvP family. In terms of assembly, the glycine cleavage system is composed of four proteins: P, T, L and H. It depends on pyridoxal 5'-phosphate as a cofactor.

It carries out the reaction N(6)-[(R)-lipoyl]-L-lysyl-[glycine-cleavage complex H protein] + glycine + H(+) = N(6)-[(R)-S(8)-aminomethyldihydrolipoyl]-L-lysyl-[glycine-cleavage complex H protein] + CO2. Its function is as follows. The glycine cleavage system catalyzes the degradation of glycine. The P protein binds the alpha-amino group of glycine through its pyridoxal phosphate cofactor; CO(2) is released and the remaining methylamine moiety is then transferred to the lipoamide cofactor of the H protein. The sequence is that of Glycine dehydrogenase (decarboxylating) from Bacteroides fragilis (strain YCH46).